Reading from the N-terminus, the 782-residue chain is Translation initiation factor IF-2 (782 aa).

The segment at 47–196 (DNAIDGTNKK…TPPKPKELPE (150 aa)) is disordered. Basic and acidic residues predominate over residues 53–65 (TNKKAEAPKKETT). Positions 66–81 (SNENGNSKGPNKPNMT) are enriched in polar residues. Low complexity predominate over residues 82-93 (NSNEKSNKPNKP). A compositionally biased stretch (polar residues) spans 115–129 (KPANTSNQTQSSGNK). Over residues 133 to 170 (GGQKRNNNNNSNRPGGGNPNRPGGNNRPNRGGNFNNKG) the composition is skewed to low complexity. One can recognise a tr-type G domain in the interval 283–452 (ERPPVVTIMG…LLVSEVEELK (170 aa)). A G1 region spans residues 292 to 299 (GHVDHGKT). 292-299 (GHVDHGKT) serves as a coordination point for GTP. Positions 317 to 321 (GITQH) are G2. The G3 stretch occupies residues 338–341 (DTPG). GTP contacts are provided by residues 338 to 342 (DTPGH) and 392 to 395 (NKID). The interval 392–395 (NKID) is G4. Residues 428-430 (SAK) form a G5 region.

The protein belongs to the TRAFAC class translation factor GTPase superfamily. Classic translation factor GTPase family. IF-2 subfamily.

It localises to the cytoplasm. One of the essential components for the initiation of protein synthesis. Protects formylmethionyl-tRNA from spontaneous hydrolysis and promotes its binding to the 30S ribosomal subunits. Also involved in the hydrolysis of GTP during the formation of the 70S ribosomal complex. This chain is Translation initiation factor IF-2, found in Listeria innocua serovar 6a (strain ATCC BAA-680 / CLIP 11262).